The primary structure comprises 265 residues: Uronate dehydrogenase (265 aa).

Residues Q12–L13, D32–S34, D49–L50, and L69–S73 each bind NAD(+). Substrate-binding positions include S73 and S109–H111. Y134 acts as the Proton acceptor in catalysis. K138 is an NAD(+) binding site. Residue S163 coordinates substrate. C164 provides a ligand contact to NAD(+). R172 provides a ligand contact to substrate.

It belongs to the NAD(P)-dependent epimerase/dehydratase family. In terms of assembly, homohexamer.

It catalyses the reaction beta-D-galacturonate + NAD(+) = D-galactaro-1,5-lactone + NADH + H(+). It carries out the reaction beta-D-glucuronate + NAD(+) = D-glucaro-1,5-lactone + NADH + H(+). It participates in carbohydrate acid metabolism; D-galacturonate degradation via prokaryotic oxidative pathway. Functionally, catalyzes the oxidation of D-galacturonate and D-glucuronate to galactarate and D-glucarate, respectively. In fact, in water solution the substrate D-galacturonate is predominantly in pyranosic form whose beta anomer is converted by the enzyme to D-galactaro-1,5-lactone; in solution, this reaction product rearranges to the more stable D-galactaro-1,4-lactone. Makes part of the oxidative degradation pathway of D-galacturonate, which allows A.tumefaciens to utilize D-galacturonate as a sole carbon source. Cannot use NADP(+) instead of NAD(+) as cosubstrate. Is not active on D-galactose, D-glucose, D-galactonate and D-gluconate. The sequence is that of Uronate dehydrogenase (udh) from Agrobacterium fabrum (strain C58 / ATCC 33970) (Agrobacterium tumefaciens (strain C58)).